Reading from the N-terminus, the 1107-residue chain is MIIFVSEEPERRLAIVSNLYALVLKPVGKKPSDKPLCAIELLQKNDLKKYGFKRLTSHEIFGVIGLIEVNGLLFVGAITGKSKVAQPCPGETVNKIFAVDFFCLNDNSWDFIEIDSSGYPVLPETASTEYQDALPKHPCYELKKLLSNGSFYYSSDFDLTSTLQHRGYGQHSLSTDTYEEEYMWNSFLMQEMITYRDHLDTNLKQILDDEGFLTTVIRGFAETFVSYVKKLKVALTIISKQSWKRAGTRFNARGVDDEANVANFVETEFIMYSSQYCYAFTQIRGSIPVFWEQGTSLINPRVQITRSFEATQPVFDKHIMKSVEKYGPVHVVNLLSTKSSEIELSKRYKEHLTHSKKLNFNKDIFLTEFDFHKETSQEGFSGVRKLIPLILDSLLSSGYYSYDVREKKNISEQHGIFRTNCLDCLDRTNLAQQIISLAAFRTFLEDFRLISSNSFIDDDDFVSKHNTLWADHGDQISQIYTGTNALKSSFSRKGKMSLAGALSDATKSVSRIYINNFMDKEKQQNIDTLLGRLPYQKAVQLYDPVNEYVSTKLQSMSDKFTSTSNINLLIGSFNVNGATKKVDLSKWLFPIGEKFKPDIVVLGLQEVIELSAGSILNADYSKSSFWENLVGDCLNQYDDKYLLLRVEQMTSLLILFFVKADKAKYVKQVEGATKKTGFRGMAGNKGAVSIRFEYGATSFCFVNSHLAAGATNVEERRSDYESIVRGITFTRTKMIPHHDSIFWLGDMNYRINLPNEDVRRELLNQEEGYIDKLLHFDQLTLGINSGSVFEGFKEPTLKFRPTYKYDPGTGTYDSSEKERTPSWTDRIIYKGENLLPLSYSDAPIMISDHRPVYAAYRAKITFVDDKERLSLKKRLFTEYKQEHPEEPGSLISDLLSLDLDNKSTDGFKSSSESSLLDIDPIMAQPTASSVASSSPVSSASASLQPVRTQNSSQSRTPIKKPVLRPPPPPAHKSVSAPAPSTSKEKSPTPQTSTASLSSVTKNIQENKPLAQNRRIPPPGFSQNILTPKSTSNLASPMSSKVDLYNSASESTRSAQDARQQTPTAFAASRDVNGQPEALLGDENPIEPEEKAKLNHMTLDSWQPLTPK.

One can recognise an SAC domain in the interval 142-482; it reads LKKLLSNGSF…GDQISQIYTG (341 aa). Position 497 is a phosphoserine (Ser497). A disordered region spans residues 926–1107; it reads TASSVASSSP…LDSWQPLTPK (182 aa). Positions 927-942 are enriched in low complexity; the sequence is ASSVASSSPVSSASAS. Positions 943–956 are enriched in polar residues; the sequence is LQPVRTQNSSQSRT. Ser986 carries the phosphoserine modification. Composition is skewed to polar residues over residues 987 to 1005, 1020 to 1038, 1045 to 1063, and 1097 to 1107; these read PTPQTSTASLSSVTKNIQE, FSQNILTPKSTSNLASPMS, NSASESTRSAQDARQQTPT, and TLDSWQPLTPK. Ser1035 carries the post-translational modification Phosphoserine. Position 1105 is a phosphothreonine (Thr1105).

This sequence belongs to the synaptojanin family. It in the central section; belongs to the inositol 1,4,5-trisphosphate 5-phosphatase family. As to quaternary structure, interacts (via SAC domain) with BSP1; the interaction is direct. Interacts with CHC1.

It is found in the cytoplasm. It carries out the reaction a 1,2-diacyl-sn-glycero-3-phospho-(1D-myo-inositol-4,5-bisphosphate) + H2O = a 1,2-diacyl-sn-glycero-3-phospho-(1D-myo-inositol 4-phosphate) + phosphate. Dephosphorylates a number of phosphatidylinositols (PIs) like phosphatidylinositol 4,5-bisphosphate (PtdIns(4,5)P2), but also phosphatidylinositol 3-phosphate (PtdIns(3)P), phosphatidylinositol 4-phosphate (PtdIns(4)P), and phosphatidylinositol 3,5-bisphosphate (PtdIns(3,5)P2). Controls the cellular levels and subcellular distribution of phosphatidylinositol 3-phosphate and phosphatidylinositol 4,5-bisphosphate. Plays an essential role in a TGN (trans Golgi network)-to-early endosome pathway. Involved in clathrin-mediated protein sorting at the TGN. The sequence is that of Polyphosphatidylinositol phosphatase INP53 (INP53) from Saccharomyces cerevisiae (strain ATCC 204508 / S288c) (Baker's yeast).